We begin with the raw amino-acid sequence, 295 residues long: Probable cell division protein WhiA (295 aa).

A DNA-binding region (H-T-H motif) is located at residues 262-293 (SLRELGKKLNLTKSQIYSKLKRIIKIAERFGD).

It belongs to the WhiA family.

In terms of biological role, involved in cell division and chromosome segregation. The polypeptide is Probable cell division protein WhiA (Thermotoga maritima (strain ATCC 43589 / DSM 3109 / JCM 10099 / NBRC 100826 / MSB8)).